A 203-amino-acid polypeptide reads, in one-letter code: MFSVGLTGGIGSGKTTVADLFGKLGATIVDTDLIAHRITAPQGLAMPLIAREFGAEFVAADGSLDRAKMRALVFSDESARKRLEAITHPLIREETEREARTAQGAYVVFVVPLLVESGTWKTRVDRVLVVDCDVETQIARVTARNGFTRAQVEAIVARQASRDARLAAADDVIANDNASVAELAAEVAALHQRYLECAAAARN.

A DPCK domain is found at 3–201; sequence SVGLTGGIGS…QRYLECAAAA (199 aa). An ATP-binding site is contributed by 11–16; that stretch reads GSGKTT.

It belongs to the CoaE family.

Its subcellular location is the cytoplasm. The catalysed reaction is 3'-dephospho-CoA + ATP = ADP + CoA + H(+). The protein operates within cofactor biosynthesis; coenzyme A biosynthesis; CoA from (R)-pantothenate: step 5/5. Catalyzes the phosphorylation of the 3'-hydroxyl group of dephosphocoenzyme A to form coenzyme A. This is Dephospho-CoA kinase from Burkholderia pseudomallei (strain 1710b).